The chain runs to 293 residues: Energy-coupling factor transporter ATP-binding protein EcfA2 (293 aa).

The ABC transporter domain occupies 3-246; that stretch reads ITFQKVEHRY…ADELEKIGVD (244 aa). Residue 40–47 participates in ATP binding; the sequence is GHTGSGKS.

It belongs to the ABC transporter superfamily. Energy-coupling factor EcfA family. As to quaternary structure, forms a stable energy-coupling factor (ECF) transporter complex composed of 2 membrane-embedded substrate-binding proteins (S component), 2 ATP-binding proteins (A component) and 2 transmembrane proteins (T component).

The protein localises to the cell membrane. In terms of biological role, ATP-binding (A) component of a common energy-coupling factor (ECF) ABC-transporter complex. Unlike classic ABC transporters this ECF transporter provides the energy necessary to transport a number of different substrates. In Bacillus anthracis, this protein is Energy-coupling factor transporter ATP-binding protein EcfA2.